A 772-amino-acid polypeptide reads, in one-letter code: MWIQVRTMDGRDTRRIDSLSKLTKVDDLRDRIQQLFGVALESQRLFYRGKQMENGHTLFDYSVGLNDIVQLLVRQIPDSFPTKHKECELSDASAGCGSGQRDSDSGSGEGAMDVDGQSISIIGENVGTSLYKKNDLVDARDLNMGAWFEAQIVNVSKKVGPYGTLPEVSDTSVTSDAIIYHVKYEDYPENGVVQLTCKDVRLRARTTLPWHEIKVGQVVMVNYNPDEPKERGYWYDAEILRKHESKKIKEIYAKVLLGDAGDSLNDCRIRFVNEIYKIEEPGSTYLNTESPQKRQNGPECKHCKDNPKRACRMCACCICGGKQDPEKQLLCDECDLAFHIYCLKPPLSVIPQDEDWYCPDCRNDASEVVLAGEKLKESKKKARMASANSSSQRDWGKGMACVGRSRECTIVPSNHYGPIPGVPVGTLWKFRVQVSESGVHRPHVAGIHGRSNDGSYSLVLAGGYEDDVDNGNEFTYTGSGGRDLSGNKRTAEQSCDQKLSNMNRALALNCSAPINDKEGSIAKDWRAGKPVRVVRNSKGRKHSKYAPEEGNRYDGIYKVVKYWPEKGKSGFLVWRYLLRRDDYEPAPWSKEGKERIKKLGLTMQYPDGYLETLASKEREKENKTEDEPIDSPSKGKRKRNSDNEQTAAKSIPKKMKVASYKLTLEQKTLIKQDVLNAKLWSEVMLFLKEGPKFVNKVEETFLCICCQEVVYEPVTTECHHNICKGCLDRSFKALVHSCPACRHDLGKNYPLNVNKPLQAILSQLFPGYESGR.

The region spanning 1 to 77 (MWIQVRTMDG…IVQLLVRQIP (77 aa)) is the Ubiquitin-like domain. Positions 90-111 (SDASAGCGSGQRDSDSGSGEGA) are disordered. Tudor-like regions lie at residues 129 to 205 (SLYK…LRAR) and 212 to 281 (EIKV…IEEP). The linker stretch occupies residues 291-299 (PQKRQNGPE). The segment at 297-364 (GPECKHCKDN…DWYCPDCRND (68 aa)) adopts a PHD-type zinc-finger fold. 2 histone H3R2me0 binding regions span residues 331-335 (CDECD) and 351-353 (PQD). The region spanning 417-580 (GPIPGVPVGT…FLVWRYLLRR (164 aa)) is the YDG domain. Residues 443 to 444 (HV) form a required to promote base flipping region. DNA contacts are provided by residues 461 to 462 (AG) and aspartate 467. Required for formation of a 5-methylcytosine-binding pocket regions lie at residues 464–467 (YEDD) and 476–479 (YTGS). Residues 615–626 (SKEREKENKTED) show a composition bias toward basic and acidic residues. The disordered stretch occupies residues 615–649 (SKEREKENKTEDEPIDSPSKGKRKRNSDNEQTAAK). An RING-type zinc finger spans residues 703–742 (CICCQEVVYEPVTTECHHNICKGCLDRSFKALVHSCPACR).

It localises to the nucleus. The catalysed reaction is S-ubiquitinyl-[E2 ubiquitin-conjugating enzyme]-L-cysteine + [acceptor protein]-L-lysine = [E2 ubiquitin-conjugating enzyme]-L-cysteine + N(6)-ubiquitinyl-[acceptor protein]-L-lysine.. Its pathway is protein modification; protein ubiquitination. Functionally, multidomain protein that acts as a key epigenetic regulator by bridging DNA methylation and chromatin modification. Specifically recognizes and binds hemimethylated DNA at replication forks via its YDG domain and recruits dnmt1 methyltransferase to ensure faithful propagation of the DNA methylation patterns through DNA replication. In addition to its role in maintenance of DNA methylation, also plays a key role in chromatin modification: through its tudor-like regions and PHD-type zinc fingers, specifically recognizes and binds histone H3 trimethylated at 'Lys-9' (H3K9me3) and unmethylated at 'Arg-2' (H3R2me0), respectively, and recruits chromatin proteins. Enriched in pericentric heterochromatin where it recruits different chromatin modifiers required for this chromatin replication. Also localizes to euchromatic regions where it negatively regulates transcription possibly by impacting DNA methylation and histone modifications. Has E3 ubiquitin-protein ligase activity by mediating the ubiquitination of target proteins. However, it is still unclear how E3 ubiquitin-protein ligase activity is related to its role in chromatin in vivo. The polypeptide is E3 ubiquitin-protein ligase UHRF1 (uhrf1) (Xenopus laevis (African clawed frog)).